The primary structure comprises 802 residues: Nuclear polyadenylated RNA-binding protein 3 (802 aa).

Disordered regions lie at residues 1-174 (MSDE…RRET) and 252-293 (ALSV…RMRF). The segment covering 22–34 (SNSNENELMNNSS) has biased composition (low complexity). The span at 37-73 (DGIEFDAPEEEREAEREEENEEQHELEDVNDEEEEDK) shows a compositional bias: acidic residues. T86 bears the Phosphothreonine mark. Composition is skewed to acidic residues over residues 101–139 (DDDD…EEGN) and 149–158 (AAEDGEDEED). The segment covering 159 to 174 (KKDKTKDKEVELRRET) has biased composition (basic and acidic residues). A compositionally biased stretch (low complexity) spans 260–276 (STISTTASASATSGARS). Over residues 277–293 (NDQRKPPLSDAQRRMRF) the composition is skewed to basic and acidic residues. Positions 330-401 (SRLFIGNLPL…KKLILEVSSS (72 aa)) constitute an RRM domain. Phosphothreonine is present on T451. 2 disordered regions span residues 571–675 (IYGA…PMDQ) and 717–802 (MQGQ…KLQK). Over residues 575-590 (PPLPVPNGPAVGPPPQ) the composition is skewed to pro residues. Residues 593 to 614 (YYQGYSMPPPQQQQQQPYGNYG) show a composition bias toward low complexity. A compositionally biased stretch (polar residues) spans 632–642 (MNQSYGRYQTS). Composition is skewed to low complexity over residues 651-661 (QIPQGYGRYQA) and 717-738 (MQGQ…MNSS). Positions 745–754 (TNYNGQNISA) are enriched in polar residues. Residues 757–769 (SAPPMSHQPPPPQ) are compositionally biased toward pro residues. Over residues 770–785 (QQQQQQQQQQQQQQQP) the composition is skewed to low complexity.

The protein resides in the nucleus. It localises to the nucleoplasm. In terms of biological role, may be required for packaging pre-mRNAs into ribonucleoprotein structures amenable to efficient nuclear RNA processing. Binds to poly(A)+ RNA. Appears to act in the maintenance of CLN3 mRNA levels. In Saccharomyces cerevisiae (strain ATCC 204508 / S288c) (Baker's yeast), this protein is Nuclear polyadenylated RNA-binding protein 3 (NAB3).